Here is a 118-residue protein sequence, read N- to C-terminus: V-type proton ATPase subunit G 2 (118 aa).

Positions 25–90 are disordered; that stretch reads ARKRKARRLK…VQGMQSSQQR (66 aa). The span at 35-56 shows a compositional bias: basic and acidic residues; it reads QAKEEAQMEVEQYRREREHEFQ. Composition is skewed to polar residues over residues 57-69 and 78-89; these read SKQQ…QGNL and RRQVQGMQSSQQ.

It belongs to the V-ATPase G subunit family. As to quaternary structure, V-ATPase is a heteromultimeric enzyme made up of two complexes: the ATP-hydrolytic V1 complex and the proton translocation V0 complex. The V1 complex consists of three catalytic AB heterodimers that form a heterohexamer, three peripheral stalks each consisting of EG heterodimers, one central rotor including subunits D and F, and the regulatory subunits C and H. The proton translocation complex V0 consists of the proton transport subunit a, a ring of proteolipid subunits c9c'', rotary subunit d, subunits e and f, and the accessory subunits ATP6AP1/Ac45 and ATP6AP2/PRR. In terms of tissue distribution, brain.

It localises to the melanosome. It is found in the cytoplasmic vesicle. The protein resides in the clathrin-coated vesicle membrane. Functionally, subunit of the V1 complex of vacuolar(H+)-ATPase (V-ATPase), a multisubunit enzyme composed of a peripheral complex (V1) that hydrolyzes ATP and a membrane integral complex (V0) that translocates protons. V-ATPase is responsible for acidifying and maintaining the pH of intracellular compartments and in some cell types, is targeted to the plasma membrane, where it is responsible for acidifying the extracellular environment. This Homo sapiens (Human) protein is V-type proton ATPase subunit G 2 (ATP6V1G2).